The following is a 317-amino-acid chain: Transaldolase (317 aa).

K126 functions as the Schiff-base intermediate with substrate in the catalytic mechanism.

The protein belongs to the transaldolase family. Type 1 subfamily. As to quaternary structure, homodimer.

The protein localises to the cytoplasm. It catalyses the reaction D-sedoheptulose 7-phosphate + D-glyceraldehyde 3-phosphate = D-erythrose 4-phosphate + beta-D-fructose 6-phosphate. Its pathway is carbohydrate degradation; pentose phosphate pathway; D-glyceraldehyde 3-phosphate and beta-D-fructose 6-phosphate from D-ribose 5-phosphate and D-xylulose 5-phosphate (non-oxidative stage): step 2/3. In terms of biological role, transaldolase is important for the balance of metabolites in the pentose-phosphate pathway. This Burkholderia ambifaria (strain MC40-6) protein is Transaldolase.